A 258-amino-acid polypeptide reads, in one-letter code: 14-3-3 protein 6 (258 aa).

Positions 238-258 (DMQDDGTDEIKEATPKPDDNE) are disordered. The span at 245 to 258 (DEIKEATPKPDDNE) shows a compositional bias: basic and acidic residues.

Belongs to the 14-3-3 family. In terms of assembly, homodimer.

This is 14-3-3 protein 6 (TFT6) from Solanum lycopersicum (Tomato).